Consider the following 706-residue polypeptide: Kinesin-like protein KIP2 (706 aa).

2 stretches are compositionally biased toward low complexity: residues 1-28 and 36-63; these read MIQKMSPSLRRPSTRSSSGSSNIPQSPS and SNLTRNSIRSTSNSGSQSISASSTRSNS. A disordered region spans residues 1–139; the sequence is MIQKMSPSLR…QPRSNSHHGS (139 aa). The region spanning 102-493 is the Kinesin motor domain; the sequence is SITVTIRPKP…LRFASRAKNV (392 aa). Polar residues predominate over residues 127–139; it reads RYSQPRSNSHHGS. 202–209 lines the ATP pocket; it reads GMTGSGKT. Residues 413-445 form a disordered region; that stretch reads VGSNIPSPSASGSSSSSGNATNNGTSPSNHIPY. The segment covering 414-441 has biased composition (low complexity); the sequence is GSNIPSPSASGSSSSSGNATNNGTSPSN. Coiled coils occupy residues 507 to 541, 569 to 589, and 612 to 689; these read NNDGDKDRTIELLRRQLEEQRRMISELKNRSNIGE, MRAENRVLKYKLENCEKLLDK, and TLLE…RALK.

Belongs to the TRAFAC class myosin-kinesin ATPase superfamily. Kinesin family. Might be dimeric.

The protein resides in the cytoplasm. It is found in the cytoskeleton. Required for assembly of the mitotic spindle. The chain is Kinesin-like protein KIP2 (KIP2) from Saccharomyces cerevisiae (strain ATCC 204508 / S288c) (Baker's yeast).